Here is a 240-residue protein sequence, read N- to C-terminus: Flavin-dependent thymidylate synthase (240 aa).

One can recognise a ThyX domain in the interval 13–235 (ITVELVKHSA…PETHAAFEKQ (223 aa)). Residues serine 64, 87–89 (RHR), and glutamate 95 contribute to the FAD site. DUMP contacts are provided by residues 84–87 (EFMR), 95–99 (EESGR), and arginine 167. Residues 87–97 (RHRIASYNEES) carry the ThyX motif motif. FAD contacts are provided by residues 183 to 185 (NAR) and asparagine 189. DUMP is bound at residue arginine 194. Arginine 194 acts as the Involved in ionization of N3 of dUMP, leading to its activation in catalysis.

The protein belongs to the thymidylate synthase ThyX family. Homotetramer. Requires FAD as cofactor.

The enzyme catalyses dUMP + (6R)-5,10-methylene-5,6,7,8-tetrahydrofolate + NADPH + H(+) = dTMP + (6S)-5,6,7,8-tetrahydrofolate + NADP(+). The protein operates within pyrimidine metabolism; dTTP biosynthesis. In terms of biological role, catalyzes the reductive methylation of 2'-deoxyuridine-5'-monophosphate (dUMP) to 2'-deoxythymidine-5'-monophosphate (dTMP) while utilizing 5,10-methylenetetrahydrofolate (mTHF) as the methyl donor, and NADPH and FADH(2) as the reductant. This chain is Flavin-dependent thymidylate synthase, found in Tropheryma whipplei (strain TW08/27) (Whipple's bacillus).